Here is a 361-residue protein sequence, read N- to C-terminus: Zygote arrest protein 1 (361 aa).

Disordered regions lie at residues 68-129 and 142-252; these read GPRP…PRSW and GLSS…EQDK. The span at 116 to 128 shows a compositional bias: low complexity; the sequence is PRSPARAGRPPRS. Position 155 is a phosphothreonine (T155). The segment covering 238 to 252 has biased composition (basic and acidic residues); sequence ASRDRASPQSTEQDK. A 3CxxC-type zinc finger spans residues 263 to 346; it reads KYGYYHCKDC…RQDLCGRCKD (84 aa).

This sequence belongs to the ZAR1 family. In terms of assembly, interacts with YBX2. Post-translationally, phosphorylation by CDK1 does not regulate formation of MARDO (mitochondria-associated ribonucleoprotein domain) membraneless compartment. In terms of processing, ubiquitinated and degradaded by the proteasome during oocyte meiotic maturation, leading to MARDO (mitochondria-associated ribonucleoprotein domain) membraneless compartment dissolution.

The protein localises to the cytoplasm. It localises to the cytoplasmic ribonucleoprotein granule. Its function is as follows. mRNA-binding protein that mediates formation of MARDO (mitochondria-associated ribonucleoprotein domain), a membraneless compartment that stores maternal mRNAs in oocytes. MARDO assembly around mitochondria is directed by an increase in mitochondrial membrane potential during oocyte growth. Promotes formation of MARDO phase-separated membraneless compartment by undergoing liquid-liquid phase separation upon binding to maternal mRNAs. Binds to the 3'-UTR of maternal mRNAs. Maternal mRNAs stored in the MARDO are translationally repressed. Essential for female fertility and oocyte-to-embryo transition by coordinating maternal mRNA storage, translation and degradation. The sequence is that of Zygote arrest protein 1 from Rattus norvegicus (Rat).